Consider the following 186-residue polypeptide: Interferon beta (186 aa).

Residues 1-21 (MTYRWILPMALLLCFSTTALS) form the signal peptide. Position 24 is a phosphotyrosine (tyrosine 24). A disulfide bridge links cysteine 52 with cysteine 161. Asparagine 101 and asparagine 136 each carry an N-linked (GlcNAc...) asparagine glycan.

It belongs to the alpha/beta interferon family. In terms of assembly, monomer.

The protein localises to the secreted. Its function is as follows. Type I interferon cytokine that plays a key role in the innate immune response to infection, developing tumors and other inflammatory stimuli. Signals via binding to high-affinity (IFNAR2) and low-affinity (IFNAR1) heterodimeric receptor, activating the canonical Jak-STAT signaling pathway resulting in transcriptional activation or repression of interferon-regulated genes that encode the effectors of the interferon response, such as antiviral proteins, regulators of cell proliferation and differentiation, and immunoregulatory proteins. Signals mostly via binding to a IFNAR1-IFNAR2 heterodimeric receptor, but can also function with IFNAR1 alone and independently of Jak-STAT pathways. Elicits a wide variety of responses, including antiviral and antibacterial activities, and can regulate the development of B-cells, myelopoiesis and lipopolysaccharide (LPS)-inducible production of tumor necrosis factor. Plays a role in neuronal homeostasis by regulating dopamine turnover and protecting dopaminergic neurons: acts by promoting neuronal autophagy and alpha-synuclein clearance, thereby preventing dopaminergic neuron loss. IFNB1 is more potent than interferon-alpha (IFN-alpha) in inducing the apoptotic and antiproliferative pathways required for control of tumor cell growth. The sequence is that of Interferon beta (IFNB1) from Equus caballus (Horse).